A 148-amino-acid chain; its full sequence is Putative pre-16S rRNA nuclease (148 aa).

The protein belongs to the YqgF nuclease family.

It localises to the cytoplasm. Its function is as follows. Could be a nuclease involved in processing of the 5'-end of pre-16S rRNA. The sequence is that of Putative pre-16S rRNA nuclease from Chromohalobacter salexigens (strain ATCC BAA-138 / DSM 3043 / CIP 106854 / NCIMB 13768 / 1H11).